The chain runs to 95 residues: Large ribosomal subunit protein bL25 (95 aa).

The protein belongs to the bacterial ribosomal protein bL25 family. Part of the 50S ribosomal subunit; part of the 5S rRNA/L5/L18/L25 subcomplex. Contacts the 5S rRNA. Binds to the 5S rRNA independently of L5 and L18.

In terms of biological role, this is one of the proteins that binds to the 5S RNA in the ribosome where it forms part of the central protuberance. The protein is Large ribosomal subunit protein bL25 of Haemophilus influenzae (strain PittGG).